The primary structure comprises 135 residues: Protein NrdI (135 aa).

Belongs to the NrdI family.

Functionally, probably involved in ribonucleotide reductase function. The chain is Protein NrdI from Pectobacterium atrosepticum (strain SCRI 1043 / ATCC BAA-672) (Erwinia carotovora subsp. atroseptica).